The following is a 349-amino-acid chain: Ribosomal RNA small subunit methyltransferase H (349 aa).

S-adenosyl-L-methionine-binding positions include 34–36, aspartate 54, phenylalanine 81, aspartate 102, and glutamine 109; that span reads GGH.

It belongs to the methyltransferase superfamily. RsmH family.

The protein localises to the cytoplasm. The enzyme catalyses cytidine(1402) in 16S rRNA + S-adenosyl-L-methionine = N(4)-methylcytidine(1402) in 16S rRNA + S-adenosyl-L-homocysteine + H(+). Specifically methylates the N4 position of cytidine in position 1402 (C1402) of 16S rRNA. In Dehalococcoides mccartyi (strain ATCC BAA-2266 / KCTC 15142 / 195) (Dehalococcoides ethenogenes (strain 195)), this protein is Ribosomal RNA small subunit methyltransferase H.